The following is a 103-amino-acid chain: Large ribosomal subunit protein bL21 (103 aa).

This sequence belongs to the bacterial ribosomal protein bL21 family. Part of the 50S ribosomal subunit. Contacts protein L20.

Its function is as follows. This protein binds to 23S rRNA in the presence of protein L20. This Lactobacillus delbrueckii subsp. bulgaricus (strain ATCC 11842 / DSM 20081 / BCRC 10696 / JCM 1002 / NBRC 13953 / NCIMB 11778 / NCTC 12712 / WDCM 00102 / Lb 14) protein is Large ribosomal subunit protein bL21.